The sequence spans 279 residues: Putative carbamate hydrolase RutD (279 aa).

In terms of domain architecture, AB hydrolase-1 spans 23 to 126 (PVVVLISGLG…LVSVNGWLRI (104 aa)).

It belongs to the AB hydrolase superfamily. Hydrolase RutD family.

The enzyme catalyses carbamate + 2 H(+) = NH4(+) + CO2. Its function is as follows. Involved in pyrimidine catabolism. May facilitate the hydrolysis of carbamate, a reaction that can also occur spontaneously. The sequence is that of Putative carbamate hydrolase RutD from Escherichia coli O17:K52:H18 (strain UMN026 / ExPEC).